A 63-amino-acid chain; its full sequence is Synergistic-type venom protein C9S3, chain 2 (63 aa).

Disulfide bonds link Cys-3–Cys-24, Cys-17–Cys-42, and Cys-46–Cys-57.

It belongs to the three-finger toxin family. Short-chain subfamily. Aminergic toxin sub-subfamily. In terms of assembly, heterodimer of C9S3 chain 1 (AC P01408) and chain 2, linked by at least two disulfide bonds. Expressed by the venom gland.

The protein localises to the secreted. Functionally, this protein shows a synergetic toxic effect in that it enhances the toxicity of other D.angusticeps toxins. The polypeptide is Synergistic-type venom protein C9S3, chain 2 (Dendroaspis angusticeps (Eastern green mamba)).